The sequence spans 71 residues: Large ribosomal subunit protein bL31 (71 aa).

Zn(2+) contacts are provided by cysteine 16, cysteine 18, cysteine 37, and cysteine 40.

It belongs to the bacterial ribosomal protein bL31 family. Type A subfamily. In terms of assembly, part of the 50S ribosomal subunit. The cofactor is Zn(2+).

Binds the 23S rRNA. The sequence is that of Large ribosomal subunit protein bL31 from Pseudomonas putida (strain W619).